We begin with the raw amino-acid sequence, 154 residues long: SsrA-binding protein (154 aa).

It belongs to the SmpB family.

It localises to the cytoplasm. In terms of biological role, required for rescue of stalled ribosomes mediated by trans-translation. Binds to transfer-messenger RNA (tmRNA), required for stable association of tmRNA with ribosomes. tmRNA and SmpB together mimic tRNA shape, replacing the anticodon stem-loop with SmpB. tmRNA is encoded by the ssrA gene; the 2 termini fold to resemble tRNA(Ala) and it encodes a 'tag peptide', a short internal open reading frame. During trans-translation Ala-aminoacylated tmRNA acts like a tRNA, entering the A-site of stalled ribosomes, displacing the stalled mRNA. The ribosome then switches to translate the ORF on the tmRNA; the nascent peptide is terminated with the 'tag peptide' encoded by the tmRNA and targeted for degradation. The ribosome is freed to recommence translation, which seems to be the essential function of trans-translation. The sequence is that of SsrA-binding protein from Staphylococcus aureus (strain Mu3 / ATCC 700698).